The sequence spans 212 residues: Thymidylate kinase (212 aa).

Residue 11 to 18 (GLEGAGKT) participates in ATP binding.

This sequence belongs to the thymidylate kinase family.

The enzyme catalyses dTMP + ATP = dTDP + ADP. Phosphorylation of dTMP to form dTDP in both de novo and salvage pathways of dTTP synthesis. The chain is Thymidylate kinase (tmk) from Buchnera aphidicola subsp. Acyrthosiphon pisum (strain APS) (Acyrthosiphon pisum symbiotic bacterium).